The sequence spans 876 residues: SED5-binding protein 2 (876 aa).

At S51 the chain carries Phosphoserine. The tract at residues 164–189 (CRRCRSYMNPFVVFINQGRKWQCNIC) is zinc finger-like. Over residues 300–324 (VSDEDDEESDGEEEDEDEEEEDVDN) the composition is skewed to acidic residues. Residues 300–326 (VSDEDDEESDGEEEDEDEEEEDVDNSE) form a disordered region.

It belongs to the SEC23/SEC24 family. SEC24 subfamily. As to quaternary structure, COPII is composed of at least five proteins: the SEC23/24 complex, the SEC13/31 complex and SAR1. Interacts with GRH1.

The protein resides in the cytoplasm. The protein localises to the golgi apparatus membrane. Its subcellular location is the endoplasmic reticulum membrane. Functionally, component of the COPII coat, that covers ER-derived vesicles involved in transport from the endoplasmic reticulum to the Golgi apparatus. COPII acts in the cytoplasm to promote the transport of secretory, plasma membrane, and vacuolar proteins from the endoplasmic reticulum to the Golgi complex. In Saccharomyces cerevisiae (strain ATCC 204508 / S288c) (Baker's yeast), this protein is SED5-binding protein 2 (SFB2).